A 288-amino-acid polypeptide reads, in one-letter code: Formamidopyrimidine-DNA glycosylase (288 aa).

The active-site Schiff-base intermediate with DNA is Pro2. Residue Glu3 is the Proton donor of the active site. Catalysis depends on Lys58, which acts as the Proton donor; for beta-elimination activity. Residues His99, Arg118, and Lys161 each contribute to the DNA site. An FPG-type zinc finger spans residues 252-288 (RVYDREAEPCPREGCGGTIKRIVQAGRSTFFCAKCQR). The active-site Proton donor; for delta-elimination activity is the Arg278.

This sequence belongs to the FPG family. As to quaternary structure, monomer. Requires Zn(2+) as cofactor.

It carries out the reaction Hydrolysis of DNA containing ring-opened 7-methylguanine residues, releasing 2,6-diamino-4-hydroxy-5-(N-methyl)formamidopyrimidine.. The enzyme catalyses 2'-deoxyribonucleotide-(2'-deoxyribose 5'-phosphate)-2'-deoxyribonucleotide-DNA = a 3'-end 2'-deoxyribonucleotide-(2,3-dehydro-2,3-deoxyribose 5'-phosphate)-DNA + a 5'-end 5'-phospho-2'-deoxyribonucleoside-DNA + H(+). Functionally, involved in base excision repair of DNA damaged by oxidation or by mutagenic agents. Acts as a DNA glycosylase that recognizes and removes damaged bases. Has a preference for oxidized purines, such as 7,8-dihydro-8-oxoguanine (8-oxoG). Has AP (apurinic/apyrimidinic) lyase activity and introduces nicks in the DNA strand. Cleaves the DNA backbone by beta-delta elimination to generate a single-strand break at the site of the removed base with both 3'- and 5'-phosphates. This chain is Formamidopyrimidine-DNA glycosylase, found in Beijerinckia indica subsp. indica (strain ATCC 9039 / DSM 1715 / NCIMB 8712).